The primary structure comprises 458 residues: Acetylcholinesterase collagenic tail peptide (458 aa).

The N-terminal stretch at 1–22 (MAVLNPMTLGIYLQLFFCSIVS) is a signal peptide. Positions 51-67 (CCLLMPPPPPLFPPPFF) are PRAD. The segment at 89–291 (PSPCMQGSLG…GERGFPGPPG (203 aa)) is disordered. Collagen-like domains are found at residues 95-271 (GSLG…PGPP) and 279-293 (GLKG…PGRC). The span at 100 to 111 (PGPPGPQGPPGL) shows a compositional bias: pro residues. Positions 117-126 (PKGEKGDLGR) are enriched in basic and acidic residues. The interval 129-132 (RKGR) is heparan sulfate proteoglycan binding. Over residues 133 to 151 (PGPPGVPGEPGPVGWPGPE) the composition is skewed to pro residues. A compositionally biased stretch (basic and acidic residues) spans 181–199 (RGEKGSRGERGDLGPKGEK). A heparan sulfate proteoglycan binding region spans residues 234-237 (KRGK). Over residues 262 to 271 (QGPPGPPGPP) the composition is skewed to pro residues.

This sequence belongs to the COLQ family. As to quaternary structure, homotrimer. Component of the asymmetric form of AChE, a disulfide-bonded oligomer composed of the collagenic subunits (Q) and a variable number of asymmetric catalytic subunits (T). The N-terminal of a collagenic subunit (Q) associates with the C-terminal of a catalytic subunit (T). The triple-helical tail is stabilized by disulfide bonds at each end. In terms of tissue distribution, expressed in skeletal muscle, heart, brain, as well as in lung, spleen, testis, but not liver. The short isoform represents about 5% of the transcripts in the soleus muscle and about 15% in the heart ventricle.

It is found in the synapse. In terms of biological role, anchors the catalytic subunits of asymmetric AChE to the synaptic basal lamina. The polypeptide is Acetylcholinesterase collagenic tail peptide (Colq) (Rattus norvegicus (Rat)).